A 567-amino-acid chain; its full sequence is Glucose-6-phosphate isomerase, cytosolic B (567 aa).

D-glucose 6-phosphate contacts are provided by residues 156–157 (GS), 212–217 (SKTFTT), Q356, E360, H391, and K516. E360 functions as the Proton donor in the catalytic mechanism. Catalysis depends on residues H391 and K516.

This sequence belongs to the GPI family. As to quaternary structure, homodimer.

It localises to the cytoplasm. It carries out the reaction alpha-D-glucose 6-phosphate = beta-D-fructose 6-phosphate. It functions in the pathway carbohydrate degradation; glycolysis; D-glyceraldehyde 3-phosphate and glycerone phosphate from D-glucose: step 2/4. In terms of biological role, catalyzes the conversion of glucose-6-phosphate to fructose-6-phosphate, the second step in glycolysis, and the reverse reaction during gluconeogenesis. The chain is Glucose-6-phosphate isomerase, cytosolic B from Oryza sativa subsp. japonica (Rice).